The primary structure comprises 332 residues: Cysteine and histidine-rich domain-containing protein 1 (332 aa).

The residue at position 2 (Ala-2) is an N-acetylalanine. An interaction with PPP5C region spans residues 2–77 (ALLCYNRGCG…KPPEPVKPEV (76 aa)). Zn(2+)-binding residues include Cys-5, Cys-10, Cys-24, His-27, Cys-42, and Cys-43. 2 consecutive CHORD domains span residues 5 to 64 (CYNR…KGRH) and 157 to 216 (CKNG…TGKH). Thr-47 carries the phosphothreonine modification. Residue Ser-51 is modified to Phosphoserine. Zn(2+) is bound by residues Cys-59, His-64, Cys-157, Cys-162, Cys-176, His-179, Cys-194, Cys-195, Cys-211, and His-216. The disordered stretch occupies residues 62–82 (GRHNSEKPPEPVKPEVKTTEK). The segment covering 64–82 (HNSEKPPEPVKPEVKTTEK) has biased composition (basic and acidic residues). The interaction with HSP90AA1 and HSP90AB1 stretch occupies residues 65–316 (NSEKPPEPVK…AEPMQWASLE (252 aa)). The region spanning 227–316 (VVPCRHDWHQ…AEPMQWASLE (90 aa)) is the CS domain.

In terms of assembly, interacts with HSP90AA1, HSP90AB1, PPP5C, ROCK1 and ROCK2.

Regulates centrosome duplication, probably by inhibiting the kinase activity of ROCK2. Proposed to act as co-chaperone for HSP90. May play a role in the regulation of NOD1 via a HSP90 chaperone complex. In vitro, has intrinsic chaperone activity. This function may be achieved by inhibiting association of ROCK2 with NPM1. Plays a role in ensuring the localization of the tyrosine kinase receptor EGFR to the plasma membrane, and thus ensures the subsequent regulation of EGFR activity and EGF-induced actin cytoskeleton remodeling. Involved in stress response. Prevents tumorigenesis. This Bos taurus (Bovine) protein is Cysteine and histidine-rich domain-containing protein 1 (CHORDC1).